We begin with the raw amino-acid sequence, 346 residues long: tRNA N6-adenosine threonylcarbamoyltransferase (346 aa).

Residues His-111 and His-115 each coordinate Fe cation. Substrate contacts are provided by residues 134–138 (LVSGG), Asp-167, Gly-180, and Asn-279. Residue Asp-307 participates in Fe cation binding.

Belongs to the KAE1 / TsaD family. Fe(2+) is required as a cofactor.

It localises to the cytoplasm. The enzyme catalyses L-threonylcarbamoyladenylate + adenosine(37) in tRNA = N(6)-L-threonylcarbamoyladenosine(37) in tRNA + AMP + H(+). Functionally, required for the formation of a threonylcarbamoyl group on adenosine at position 37 (t(6)A37) in tRNAs that read codons beginning with adenine. Is involved in the transfer of the threonylcarbamoyl moiety of threonylcarbamoyl-AMP (TC-AMP) to the N6 group of A37, together with TsaE and TsaB. TsaD likely plays a direct catalytic role in this reaction. The protein is tRNA N6-adenosine threonylcarbamoyltransferase of Burkholderia ambifaria (strain MC40-6).